The chain runs to 331 residues: Outer membrane lipoprotein PM1514 (331 aa).

A signal peptide spans 1–20 (MQYFDIKKSLPVFCSLLITA). A lipid anchor (N-palmitoyl cysteine) is attached at cysteine 21. Cysteine 21 is lipidated: S-diacylglycerol cysteine.

It localises to the cell outer membrane. It is found in the cell surface. The polypeptide is Outer membrane lipoprotein PM1514 (Pasteurella multocida (strain Pm70)).